The primary structure comprises 431 residues: Histidine--tRNA ligase (431 aa).

The tract at residues 1–20 (MALQRPKGTQDHLPDGSPKL) is disordered.

Belongs to the class-II aminoacyl-tRNA synthetase family. Homodimer.

Its subcellular location is the cytoplasm. It carries out the reaction tRNA(His) + L-histidine + ATP = L-histidyl-tRNA(His) + AMP + diphosphate + H(+). The polypeptide is Histidine--tRNA ligase (Deinococcus geothermalis (strain DSM 11300 / CIP 105573 / AG-3a)).